The primary structure comprises 286 residues: Small ribosomal subunit protein uS2 (286 aa).

Positions 231 to 286 (ERAQAEAKAAAGDNDAPVSSEGESTEVASDAASTASETTATSSDESAAESSEAESK) are disordered. Over residues 255 to 280 (TEVASDAASTASETTATSSDESAAES) the composition is skewed to low complexity.

Belongs to the universal ribosomal protein uS2 family.

This Corynebacterium kroppenstedtii (strain DSM 44385 / JCM 11950 / CIP 105744 / CCUG 35717) protein is Small ribosomal subunit protein uS2.